The primary structure comprises 291 residues: 33 kDa chaperonin (291 aa).

2 cysteine pairs are disulfide-bonded: Cys-229/Cys-231 and Cys-262/Cys-265.

Belongs to the HSP33 family. Under oxidizing conditions two disulfide bonds are formed involving the reactive cysteines. Under reducing conditions zinc is bound to the reactive cysteines and the protein is inactive.

It is found in the cytoplasm. Functionally, redox regulated molecular chaperone. Protects both thermally unfolding and oxidatively damaged proteins from irreversible aggregation. Plays an important role in the bacterial defense system toward oxidative stress. The sequence is that of 33 kDa chaperonin from Vibrio cholerae serotype O1 (strain ATCC 39315 / El Tor Inaba N16961).